Reading from the N-terminus, the 443-residue chain is Xaa-Pro dipeptidase (443 aa).

Asp246, Asp257, His339, Glu384, and Glu423 together coordinate Mn(2+).

Belongs to the peptidase M24B family. Bacterial-type prolidase subfamily. The cofactor is Mn(2+).

The catalysed reaction is Xaa-L-Pro dipeptide + H2O = an L-alpha-amino acid + L-proline. Splits dipeptides with a prolyl residue in the C-terminal position. The polypeptide is Xaa-Pro dipeptidase (Klebsiella pneumoniae (strain 342)).